We begin with the raw amino-acid sequence, 421 residues long: UDP-N-acetylglucosamine 1-carboxyvinyltransferase (421 aa).

Lys22–Asn23 contacts phosphoenolpyruvate. Arg93 is a UDP-N-acetyl-alpha-D-glucosamine binding site. The Proton donor role is filled by Cys117. Cys117 is subject to 2-(S-cysteinyl)pyruvic acid O-phosphothioketal. Residues Arg122–Leu126, Asp308, and Ile330 each bind UDP-N-acetyl-alpha-D-glucosamine.

This sequence belongs to the EPSP synthase family. MurA subfamily.

The protein localises to the cytoplasm. The enzyme catalyses phosphoenolpyruvate + UDP-N-acetyl-alpha-D-glucosamine = UDP-N-acetyl-3-O-(1-carboxyvinyl)-alpha-D-glucosamine + phosphate. Its pathway is cell wall biogenesis; peptidoglycan biosynthesis. Its function is as follows. Cell wall formation. Adds enolpyruvyl to UDP-N-acetylglucosamine. This chain is UDP-N-acetylglucosamine 1-carboxyvinyltransferase, found in Pseudomonas putida (strain W619).